We begin with the raw amino-acid sequence, 623 residues long: Membrane protein insertase YidC (623 aa).

A run of 5 helical transmembrane segments spans residues 8–28 (LILA…LFPP), 379–399 (MGLA…PLAY), 449–469 (LPIL…FVTI), 507–527 (TTMA…SMWL), and 543–563 (IFAW…SGLV). A compositionally biased stretch (low complexity) spans 601–617 (KPAAQPAGKAANDGAAP). A disordered region spans residues 601–623 (KPAAQPAGKAANDGAAPAKKRKP).

Belongs to the OXA1/ALB3/YidC family. Type 1 subfamily. Interacts with the Sec translocase complex via SecD. Specifically interacts with transmembrane segments of nascent integral membrane proteins during membrane integration.

The protein localises to the cell inner membrane. In terms of biological role, required for the insertion and/or proper folding and/or complex formation of integral membrane proteins into the membrane. Involved in integration of membrane proteins that insert both dependently and independently of the Sec translocase complex, as well as at least some lipoproteins. Aids folding of multispanning membrane proteins. This chain is Membrane protein insertase YidC, found in Cereibacter sphaeroides (strain ATCC 17023 / DSM 158 / JCM 6121 / CCUG 31486 / LMG 2827 / NBRC 12203 / NCIMB 8253 / ATH 2.4.1.) (Rhodobacter sphaeroides).